Here is a 182-residue protein sequence, read N- to C-terminus: ATP synthase subunit delta (182 aa).

The protein belongs to the ATPase delta chain family. As to quaternary structure, F-type ATPases have 2 components, F(1) - the catalytic core - and F(0) - the membrane proton channel. F(1) has five subunits: alpha(3), beta(3), gamma(1), delta(1), epsilon(1). CF(0) has four main subunits: a(1), b(1), b'(1) and c(10-14). The alpha and beta chains form an alternating ring which encloses part of the gamma chain. F(1) is attached to F(0) by a central stalk formed by the gamma and epsilon chains, while a peripheral stalk is formed by the delta, b and b' chains.

Its subcellular location is the cellular thylakoid membrane. In terms of biological role, f(1)F(0) ATP synthase produces ATP from ADP in the presence of a proton or sodium gradient. F-type ATPases consist of two structural domains, F(1) containing the extramembraneous catalytic core and F(0) containing the membrane proton channel, linked together by a central stalk and a peripheral stalk. During catalysis, ATP synthesis in the catalytic domain of F(1) is coupled via a rotary mechanism of the central stalk subunits to proton translocation. Functionally, this protein is part of the stalk that links CF(0) to CF(1). It either transmits conformational changes from CF(0) to CF(1) or is implicated in proton conduction. In Synechococcus sp. (strain JA-3-3Ab) (Cyanobacteria bacterium Yellowstone A-Prime), this protein is ATP synthase subunit delta.